Here is a 221-residue protein sequence, read N- to C-terminus: Large ribosomal subunit protein uL3 (221 aa).

Positions 140–160 (GGPKTHGSGFHRHAGSIGMRS) are disordered.

This sequence belongs to the universal ribosomal protein uL3 family. In terms of assembly, part of the 50S ribosomal subunit. Forms a cluster with proteins L14 and L19.

Functionally, one of the primary rRNA binding proteins, it binds directly near the 3'-end of the 23S rRNA, where it nucleates assembly of the 50S subunit. This Chlamydia caviae (strain ATCC VR-813 / DSM 19441 / 03DC25 / GPIC) (Chlamydophila caviae) protein is Large ribosomal subunit protein uL3.